We begin with the raw amino-acid sequence, 351 residues long: Prostaglandin reductase 2 (351 aa).

99-100 provides a ligand contact to substrate; the sequence is FY. NADP(+)-binding positions include 165 to 168, Lys-192, Tyr-208, Asn-231, 253 to 259, 287 to 289, and Asn-337; these read GACG, CGQISQY, and FLV. 288–290 contributes to the substrate binding site; the sequence is LVL.

This sequence belongs to the NADP-dependent oxidoreductase L4BD family. Monomer.

The protein localises to the cytoplasm. The catalysed reaction is 13,14-dihydro-15-oxo-prostaglandin E2 + NAD(+) = 15-oxoprostaglandin E2 + NADH + H(+). It catalyses the reaction 13,14-dihydro-15-oxo-prostaglandin E2 + NADP(+) = 15-oxoprostaglandin E2 + NADPH + H(+). The enzyme catalyses 13,14-dihydro-15-oxo-PGF2alpha + NADP(+) = 15-oxoprostaglandin F2alpha + NADPH + H(+). It carries out the reaction 13,14-dihydro-15-oxo-prostaglandin E1 + NADP(+) = 15-oxoprostaglandin E1 + NADPH + H(+). The catalysed reaction is 13,14-dihydro-15-oxo-prostaglandin F1alpha + NADP(+) = 15-oxoprostaglandin F1alpha + NADPH + H(+). In terms of biological role, functions as 15-oxo-prostaglandin 13-reductase and acts on 15-keto-PGE1, 15-keto-PGE2, 15-keto-PGE1-alpha and 15-keto-PGE2-alpha with highest activity towards 15-keto-PGE2. Overexpression represses transcriptional activity of PPARG and inhibits adipocyte differentiation. This Bos taurus (Bovine) protein is Prostaglandin reductase 2 (PTGR2).